Reading from the N-terminus, the 137-residue chain is MRILGLDVGTKTVGVAISDEMGWTAQGLETIKINEERGHFGFDRISELVKQYNVDKIVVGLPKNMNGTIGPRGEACQQFAENLRELLQLDVVMWDERLSTMAAERLLISADVSRKKRKQVIDKMAAVVILQGFLDRK.

It belongs to the YqgF nuclease family.

It localises to the cytoplasm. Could be a nuclease involved in processing of the 5'-end of pre-16S rRNA. The protein is Putative pre-16S rRNA nuclease of Bacillus cereus (strain B4264).